The chain runs to 202 residues: ATP-dependent Clp protease proteolytic subunit (202 aa).

The active-site Nucleophile is the Ser101. The active site involves His126.

This sequence belongs to the peptidase S14 family. Component of the chloroplastic Clp protease core complex.

Its subcellular location is the plastid. It localises to the chloroplast stroma. It carries out the reaction Hydrolysis of proteins to small peptides in the presence of ATP and magnesium. alpha-casein is the usual test substrate. In the absence of ATP, only oligopeptides shorter than five residues are hydrolyzed (such as succinyl-Leu-Tyr-|-NHMec, and Leu-Tyr-Leu-|-Tyr-Trp, in which cleavage of the -Tyr-|-Leu- and -Tyr-|-Trp bonds also occurs).. Functionally, cleaves peptides in various proteins in a process that requires ATP hydrolysis. Has a chymotrypsin-like activity. Plays a major role in the degradation of misfolded proteins. This is ATP-dependent Clp protease proteolytic subunit from Acorus gramineus (Dwarf sweet flag).